A 152-amino-acid polypeptide reads, in one-letter code: MFRRPVLQVFRQFVRHESEVASSLVLERSLNRVQLLGRVGQDPVMRQVEGKNPVTIFSLATNEMWRSGDSEVYQMGDVSQKTTWHRISVFRPGLRDVAYQYVKKGARIFVEGKVDYGEYMDKNNVRRQATTIIAGKKLVVHSVSGCSLEGLA.

Residues 1–16 (MFRRPVLQVFRQFVRH) constitute a mitochondrion transit peptide. The SSB domain occupies 30 to 141 (LNRVQLLGRV…IIAGKKLVVH (112 aa)). Phosphoserine is present on residues Ser67 and Ser79. Lys113 bears the N6-acetyllysine mark. An N6-succinyllysine modification is found at Lys122.

In terms of assembly, homotetramer. Interacts with MPG/AAG, through inhibition of its glycosylase activity it potentially prevents formation of DNA breaks in ssDNA, ensuring that base removal primarily occurs in dsDNA. Interacts with POLDIP2. Interacts with PRIMPOL. Expressed in all the layers of the retina (at protein level).

It is found in the mitochondrion. The protein resides in the mitochondrion matrix. It localises to the mitochondrion nucleoid. Binds preferentially and cooperatively to pyrimidine rich single-stranded DNA (ss-DNA). In vitro, required to maintain the copy number of mitochondrial DNA (mtDNA) and plays a crucial role during mtDNA replication by stimulating the activity of the replisome components POLG and TWNK at the replication fork. Promotes the activity of the gamma complex polymerase POLG, largely by organizing the template DNA and eliminating secondary structures to favor ss-DNA conformations that facilitate POLG activity. In addition it is able to promote the 5'-3' unwinding activity of the mtDNA helicase TWNK. May also function in mtDNA repair. This chain is Single-stranded DNA-binding protein, mitochondrial (Ssbp1), found in Mus musculus (Mouse).